The primary structure comprises 514 residues: MTTTKRPIALLILDGWGYRENTHMNAIYHANTPVLDRLNAQYAHGLISGSGLDVGLPDGQMGNSEVGHINLGSGRIVYQELTRISKAIADHEFEQNPALCDAVDAAVKAGGAVHIMGLLSPGGVHSHEEHIEAMCRMAVARGATKVYLHAFLDGRDTPPRSAKGSLSHFDDLFTTLGHGRIASIIGRYFAMDRDNRWDRVSQAYELITQGKAKFQYDNAVTALEAAYERNENDEFVSSSAITDSEGKVASLNDGDALIFMNFRADRARQITRSFINADFDGFERAVTPKVNFVTLTEYAADIKAPIAYPSENLVNTLGEVLQNRGRTQLRISETEKYAHVTFFFNGGKEEPFNGEDRILINSPKVATYDLQPEMSSTELTDKLVAAIESAQYDVIICNYPNGDMVGHTGNFDAAVKACEAVDACIGRVVDALAKVGGECIITADHGNAEQMTDETTGQAHTAHTSELVPFVFVGRDATIDEGGKLSDVAPTILHLMGETIPAEMTGKPLIHVKE.

Positions 14 and 64 each coordinate Mn(2+). The Phosphoserine intermediate role is filled by Ser64. Substrate contacts are provided by residues His125, 155 to 156, Arg187, Arg193, 263 to 266, and Lys336; these read RD and RADR. Mn(2+) contacts are provided by Asp403, His407, Asp444, His445, and His463.

This sequence belongs to the BPG-independent phosphoglycerate mutase family. As to quaternary structure, monomer. Mn(2+) serves as cofactor.

It catalyses the reaction (2R)-2-phosphoglycerate = (2R)-3-phosphoglycerate. It participates in carbohydrate degradation; glycolysis; pyruvate from D-glyceraldehyde 3-phosphate: step 3/5. Functionally, catalyzes the interconversion of 2-phosphoglycerate and 3-phosphoglycerate. This Shewanella sp. (strain ANA-3) protein is 2,3-bisphosphoglycerate-independent phosphoglycerate mutase.